Here is a 453-residue protein sequence, read N- to C-terminus: UDP-glycosyltransferase 79B3 (453 aa).

Residues serine 266, 325 to 327, 342 to 350, and 364 to 367 contribute to the UDP-alpha-D-glucose site; these read VQQ, HCGFGSMWE, and LGDQ.

Belongs to the UDP-glycosyltransferase family.

The protein is UDP-glycosyltransferase 79B3 (UGT79B3) of Arabidopsis thaliana (Mouse-ear cress).